A 740-amino-acid polypeptide reads, in one-letter code: Catalase-peroxidase (740 aa).

The tryptophyl-tyrosyl-methioninium (Trp-Tyr) (with M-256) cross-link spans 102 to 229; the sequence is WHAAGTYRTG…LAAIQMGLIY (128 aa). H103 functions as the Proton acceptor in the catalytic mechanism. A disordered region spans residues 111 to 130; it reads GDGRGGSSSGQQRFAPLNSW. The tryptophyl-tyrosyl-methioninium (Tyr-Met) (with W-102) cross-link spans 229–256; it reads YVNPEGPGGDPHDPEGMARDMRETFARM. H271 lines the heme b pocket.

This sequence belongs to the peroxidase family. Peroxidase/catalase subfamily. As to quaternary structure, homodimer or homotetramer. Heme b is required as a cofactor. In terms of processing, formation of the three residue Trp-Tyr-Met cross-link is important for the catalase, but not the peroxidase activity of the enzyme.

The enzyme catalyses H2O2 + AH2 = A + 2 H2O. It catalyses the reaction 2 H2O2 = O2 + 2 H2O. In terms of biological role, bifunctional enzyme with both catalase and broad-spectrum peroxidase activity. The polypeptide is Catalase-peroxidase (Erythrobacter litoralis (strain HTCC2594)).